The following is a 153-amino-acid chain: Endoribonuclease YbeY (153 aa).

Positions 114, 118, and 124 each coordinate Zn(2+).

The protein belongs to the endoribonuclease YbeY family. It depends on Zn(2+) as a cofactor.

Its subcellular location is the cytoplasm. Functionally, single strand-specific metallo-endoribonuclease involved in late-stage 70S ribosome quality control and in maturation of the 3' terminus of the 16S rRNA. The protein is Endoribonuclease YbeY of Shewanella denitrificans (strain OS217 / ATCC BAA-1090 / DSM 15013).